The sequence spans 696 residues: Polyribonucleotide nucleotidyltransferase (696 aa).

Asp483 and Asp489 together coordinate Mg(2+). The KH domain maps to 550 to 609 (PRITTIWVKVDKIRDVIGSGGKNIRSVTEATGVSIDIDDTGKINIASTNKEACDLAIKMI). The S1 motif domain occupies 619-687 (GKLYMGTVKK…KQGKIKLSRK (69 aa)).

It belongs to the polyribonucleotide nucleotidyltransferase family. The cofactor is Mg(2+).

Its subcellular location is the cytoplasm. It carries out the reaction RNA(n+1) + phosphate = RNA(n) + a ribonucleoside 5'-diphosphate. Its function is as follows. Involved in mRNA degradation. Catalyzes the phosphorolysis of single-stranded polyribonucleotides processively in the 3'- to 5'-direction. In Citrifermentans bemidjiense (strain ATCC BAA-1014 / DSM 16622 / JCM 12645 / Bem) (Geobacter bemidjiensis), this protein is Polyribonucleotide nucleotidyltransferase.